Reading from the N-terminus, the 191-residue chain is DNA-directed RNA polymerase subunit Rpo3 (191 aa).

The protein belongs to the archaeal Rpo3/eukaryotic RPB3 RNA polymerase subunit family. As to quaternary structure, part of the RNA polymerase complex. Interacts with Rpo12. Forms an Rpo3-Rpo10-Rpo11-Rpo12 complex upon coexpression.

It is found in the cytoplasm. The enzyme catalyses RNA(n) + a ribonucleoside 5'-triphosphate = RNA(n+1) + diphosphate. In terms of biological role, DNA-dependent RNA polymerase (RNAP) catalyzes the transcription of DNA into RNA using the four ribonucleoside triphosphates as substrates. This chain is DNA-directed RNA polymerase subunit Rpo3, found in Methanocaldococcus jannaschii (strain ATCC 43067 / DSM 2661 / JAL-1 / JCM 10045 / NBRC 100440) (Methanococcus jannaschii).